Consider the following 287-residue polypeptide: ATP synthase gamma chain (287 aa).

This sequence belongs to the ATPase gamma chain family. As to quaternary structure, F-type ATPases have 2 components, CF(1) - the catalytic core - and CF(0) - the membrane proton channel. CF(1) has five subunits: alpha(3), beta(3), gamma(1), delta(1), epsilon(1). CF(0) has three main subunits: a, b and c.

The protein resides in the cell inner membrane. In terms of biological role, produces ATP from ADP in the presence of a proton gradient across the membrane. The gamma chain is believed to be important in regulating ATPase activity and the flow of protons through the CF(0) complex. This Salmonella gallinarum (strain 287/91 / NCTC 13346) protein is ATP synthase gamma chain.